The chain runs to 107 residues: uncharacterized protein (107 aa).

This is an uncharacterized protein from Microplitis demolitor (Parasitoid wasp).